A 299-amino-acid polypeptide reads, in one-letter code: MQNPKPLVIVLLGPTASGKTDLAIQIAKKIKVSIHNIDSRQLYKGMNIGTAKPTIEQQEEIKHYLLDLKDPNNPITLHEFKKEAELSLKNIFSKEKCGFLVGGSGLYLKSLTSGLCPPSVPAQEKLRKEFRRLGQKECHQILKKCDPIAWEKISPRDSIRTIRALEVFYSTGQTISSLKTLKPPDWNLLELGLDPRNLQQRIAKRTKILFQKGLIDETKALIHQYGEDLPLLQTIGYKEACTVIKGEYSITEAIEITTQRTNQFAKKQRTWFRRQHNPKWLNEKNSLEEALSLIQNVIG.

ATP is bound at residue 13 to 20; that stretch reads GPTASGKT. 15–20 contributes to the substrate binding site; sequence TASGKT. The tract at residues 38–41 is interaction with substrate tRNA; that stretch reads DSRQ.

The protein belongs to the IPP transferase family. In terms of assembly, monomer. The cofactor is Mg(2+).

The enzyme catalyses adenosine(37) in tRNA + dimethylallyl diphosphate = N(6)-dimethylallyladenosine(37) in tRNA + diphosphate. In terms of biological role, catalyzes the transfer of a dimethylallyl group onto the adenine at position 37 in tRNAs that read codons beginning with uridine, leading to the formation of N6-(dimethylallyl)adenosine (i(6)A). The sequence is that of tRNA dimethylallyltransferase from Prochlorococcus marinus (strain SARG / CCMP1375 / SS120).